Reading from the N-terminus, the 538-residue chain is Protein phosphatase EYA2 (538 aa).

The span at histidine 209–serine 230 shows a compositional bias: polar residues. The segment at histidine 209–glycine 263 is disordered. A compositionally biased stretch (basic and acidic residues) spans lysine 234–leucine 249. Aspartate 274 serves as the catalytic Nucleophile. Residues aspartate 274, aspartate 276, and aspartate 502 each contribute to the Mg(2+) site. Aspartate 276 acts as the Proton donor in catalysis.

Belongs to the HAD-like hydrolase superfamily. EYA family. Interacts with DACH2 and SIX1, and probably with SIX2, SIX4 and SIX5. Interacts with CAPN8. Interacts with GNAZ and GNAI2; this precludes interaction with SIX1. It depends on Mg(2+) as a cofactor. Highest expression in muscle with lower levels in kidney, placenta, pancreas, brain and heart.

It is found in the cytoplasm. It localises to the nucleus. The catalysed reaction is O-phospho-L-tyrosyl-[protein] + H2O = L-tyrosyl-[protein] + phosphate. Functions both as protein phosphatase and as transcriptional coactivator for SIX1, and probably also for SIX2, SIX4 and SIX5. Tyrosine phosphatase that dephosphorylates 'Tyr-142' of histone H2AX (H2AXY142ph) and promotes efficient DNA repair via the recruitment of DNA repair complexes containing MDC1. 'Tyr-142' phosphorylation of histone H2AX plays a central role in DNA repair and acts as a mark that distinguishes between apoptotic and repair responses to genotoxic stress. Its function as histone phosphatase may contribute to its function in transcription regulation during organogenesis. Plays an important role in hypaxial muscle development together with SIX1 and DACH2; in this it is functionally redundant with EYA1. In Homo sapiens (Human), this protein is Protein phosphatase EYA2 (EYA2).